The chain runs to 340 residues: Glyceraldehyde-3-phosphate dehydrogenase (340 aa).

NAD(+) is bound by residues 11-12 (TI) and Gly109. Residue 138–140 (SCN) coordinates D-glyceraldehyde 3-phosphate. Catalysis depends on Cys139, which acts as the Nucleophile. Arg167 is a binding site for NAD(+). 193 to 194 (HA) contacts D-glyceraldehyde 3-phosphate. Gln300 is an NAD(+) binding site.

Belongs to the glyceraldehyde-3-phosphate dehydrogenase family. Homotetramer.

The protein localises to the cytoplasm. The catalysed reaction is D-glyceraldehyde 3-phosphate + phosphate + NADP(+) = (2R)-3-phospho-glyceroyl phosphate + NADPH + H(+). It carries out the reaction D-glyceraldehyde 3-phosphate + phosphate + NAD(+) = (2R)-3-phospho-glyceroyl phosphate + NADH + H(+). Its pathway is carbohydrate degradation; glycolysis; pyruvate from D-glyceraldehyde 3-phosphate: step 1/5. The protein is Glyceraldehyde-3-phosphate dehydrogenase of Saccharolobus islandicus (strain M.14.25 / Kamchatka #1) (Sulfolobus islandicus).